A 99-amino-acid chain; its full sequence is Large ribosomal subunit protein uL23 (99 aa).

Contacts protein L29, and trigger factor when it is bound to the ribosome. Part of the 50S ribosomal subunit.

Functionally, one of the early assembly proteins it binds 23S rRNA. One of the proteins that surrounds the polypeptide exit tunnel on the outside of the ribosome. Forms the main docking site for trigger factor binding to the ribosome. This is Large ribosomal subunit protein uL23 from Rhodopseudomonas palustris (strain ATCC BAA-98 / CGA009).